Consider the following 259-residue polypeptide: Type III pantothenate kinase (259 aa).

D6–L13 is an ATP binding site. G108–R111 lines the substrate pocket. The active-site Proton acceptor is the D110. D130 is a binding site for K(+). T133 lines the ATP pocket. T185 is a binding site for substrate.

This sequence belongs to the type III pantothenate kinase family. Homodimer. The cofactor is NH4(+). K(+) is required as a cofactor.

Its subcellular location is the cytoplasm. It carries out the reaction (R)-pantothenate + ATP = (R)-4'-phosphopantothenate + ADP + H(+). It functions in the pathway cofactor biosynthesis; coenzyme A biosynthesis; CoA from (R)-pantothenate: step 1/5. Its function is as follows. Catalyzes the phosphorylation of pantothenate (Pan), the first step in CoA biosynthesis. The protein is Type III pantothenate kinase of Maricaulis maris (strain MCS10) (Caulobacter maris).